Here is a 706-residue protein sequence, read N- to C-terminus: Ribosomal RNA large subunit methyltransferase K/L (706 aa).

Positions 43 to 154 constitute a THUMP domain; sequence LMYQSLLWSR…RDMASVALDL (112 aa).

Belongs to the methyltransferase superfamily. RlmKL family.

The protein localises to the cytoplasm. It carries out the reaction guanosine(2445) in 23S rRNA + S-adenosyl-L-methionine = N(2)-methylguanosine(2445) in 23S rRNA + S-adenosyl-L-homocysteine + H(+). The enzyme catalyses guanosine(2069) in 23S rRNA + S-adenosyl-L-methionine = N(2)-methylguanosine(2069) in 23S rRNA + S-adenosyl-L-homocysteine + H(+). Functionally, specifically methylates the guanine in position 2445 (m2G2445) and the guanine in position 2069 (m7G2069) of 23S rRNA. In Yersinia enterocolitica serotype O:8 / biotype 1B (strain NCTC 13174 / 8081), this protein is Ribosomal RNA large subunit methyltransferase K/L.